A 221-amino-acid polypeptide reads, in one-letter code: Leucine rich adaptor protein 1-like (221 aa).

Met1 carries the post-translational modification N-acetylmethionine. Residues 24-81 are disordered; that stretch reads LARSLRGEELAPREGAADPSGVGGSCSSSSSCSSFAPSVSSSSSSSPASGSPRRSHPS. Positions 28–39 are enriched in basic and acidic residues; the sequence is LRGEELAPREGA. Residues 48 to 75 are compositionally biased toward low complexity; sequence SCSSSSSCSSFAPSVSSSSSSSPASGSP.

This is Leucine rich adaptor protein 1-like (Lurap1l) from Mus musculus (Mouse).